Reading from the N-terminus, the 339-residue chain is Anthranilate phosphoribosyltransferase (339 aa).

5-phospho-alpha-D-ribose 1-diphosphate contacts are provided by residues glycine 79, 82-83, serine 87, 89-92, 107-115, and serine 119; these read GD, NIST, and KHGNRSISS. Residue glycine 79 participates in anthranilate binding. Serine 91 contributes to the Mg(2+) binding site. Asparagine 110 is an anthranilate binding site. An anthranilate-binding site is contributed by arginine 165. The Mg(2+) site is built by aspartate 224 and glutamate 225.

This sequence belongs to the anthranilate phosphoribosyltransferase family. Homodimer. The cofactor is Mg(2+).

The catalysed reaction is N-(5-phospho-beta-D-ribosyl)anthranilate + diphosphate = 5-phospho-alpha-D-ribose 1-diphosphate + anthranilate. It participates in amino-acid biosynthesis; L-tryptophan biosynthesis; L-tryptophan from chorismate: step 2/5. Its function is as follows. Catalyzes the transfer of the phosphoribosyl group of 5-phosphorylribose-1-pyrophosphate (PRPP) to anthranilate to yield N-(5'-phosphoribosyl)-anthranilate (PRA). This is Anthranilate phosphoribosyltransferase from Listeria monocytogenes serovar 1/2a (strain ATCC BAA-679 / EGD-e).